Consider the following 451-residue polypeptide: tRNA-2-methylthio-N(6)-dimethylallyladenosine synthase (451 aa).

The MTTase N-terminal domain maps to 3-120 (LKLHIKTYGC…LPEMINHVRI (118 aa)). The [4Fe-4S] cluster site is built by Cys12, Cys49, Cys83, Cys157, Cys161, and Cys164. Residues 143-375 (QAKGPTAFVS…QECIRKQAMK (233 aa)) form the Radical SAM core domain. The 64-residue stretch at 378-441 (QAMKGTVQCI…SNSLRGELIS (64 aa)) folds into the TRAM domain.

The protein belongs to the methylthiotransferase family. MiaB subfamily. Monomer. It depends on [4Fe-4S] cluster as a cofactor.

It is found in the cytoplasm. The enzyme catalyses N(6)-dimethylallyladenosine(37) in tRNA + (sulfur carrier)-SH + AH2 + 2 S-adenosyl-L-methionine = 2-methylsulfanyl-N(6)-dimethylallyladenosine(37) in tRNA + (sulfur carrier)-H + 5'-deoxyadenosine + L-methionine + A + S-adenosyl-L-homocysteine + 2 H(+). Its function is as follows. Catalyzes the methylthiolation of N6-(dimethylallyl)adenosine (i(6)A), leading to the formation of 2-methylthio-N6-(dimethylallyl)adenosine (ms(2)i(6)A) at position 37 in tRNAs that read codons beginning with uridine. This chain is tRNA-2-methylthio-N(6)-dimethylallyladenosine synthase, found in Baumannia cicadellinicola subsp. Homalodisca coagulata.